The sequence spans 72 residues: uncharacterized protein (72 aa).

Residues 27 to 55 (YTQNLINELQEARDSINDLQRAHERLKLV) are a coiled coil.

This is an uncharacterized protein from Schizosaccharomyces pombe (strain 972 / ATCC 24843) (Fission yeast).